We begin with the raw amino-acid sequence, 91 residues long: Probable Fe(2+)-trafficking protein (91 aa).

Belongs to the Fe(2+)-trafficking protein family.

In terms of biological role, could be a mediator in iron transactions between iron acquisition and iron-requiring processes, such as synthesis and/or repair of Fe-S clusters in biosynthetic enzymes. In Paraburkholderia phymatum (strain DSM 17167 / CIP 108236 / LMG 21445 / STM815) (Burkholderia phymatum), this protein is Probable Fe(2+)-trafficking protein.